The sequence spans 322 residues: uncharacterized protein (322 aa).

The next 5 membrane-spanning stretches (helical) occupy residues 159-179, 203-223, 234-254, 267-287, and 296-316; these read GIIFCIVSILYCIINIRMLYL, MNIPALGAWGSVVAITFYIWL, GGILTMTAFLLSAIAAIRVGL, FEGSSAVVIAIILGALPLIPY, and TLLSGYLSIVISMIINSFFAW.

It is found in the membrane. This is an uncharacterized protein from Dictyostelium discoideum (Social amoeba).